The primary structure comprises 295 residues: Protein FAM221A (295 aa).

Positions 272–283 are enriched in basic and acidic residues; it reads QERLLKEKEQKR. The segment at 272–295 is disordered; it reads QERLLKEKEQKRQKNSKPPTTNRP.

This sequence belongs to the FAM221 family.

The chain is Protein FAM221A (fam221a) from Xenopus tropicalis (Western clawed frog).